A 352-amino-acid polypeptide reads, in one-letter code: tRNA-specific 2-thiouridylase MnmA (352 aa).

ATP contacts are provided by residues 11–18 (AMSGGVDS) and Met37. The Nucleophile role is filled by Cys101. An intrachain disulfide couples Cys101 to Cys197. Gly125 serves as a coordination point for ATP. The interaction with tRNA stretch occupies residues 147-149 (KDQ). Residue Cys197 is the Cysteine persulfide intermediate of the active site. The tract at residues 302-303 (RY) is interaction with tRNA.

This sequence belongs to the MnmA/TRMU family.

Its subcellular location is the cytoplasm. The enzyme catalyses S-sulfanyl-L-cysteinyl-[protein] + uridine(34) in tRNA + AH2 + ATP = 2-thiouridine(34) in tRNA + L-cysteinyl-[protein] + A + AMP + diphosphate + H(+). Catalyzes the 2-thiolation of uridine at the wobble position (U34) of tRNA, leading to the formation of s(2)U34. The sequence is that of tRNA-specific 2-thiouridylase MnmA from Syntrophotalea carbinolica (strain DSM 2380 / NBRC 103641 / GraBd1) (Pelobacter carbinolicus).